A 256-amino-acid polypeptide reads, in one-letter code: 5-oxoprolinase subunit A (256 aa).

It belongs to the LamB/PxpA family. In terms of assembly, forms a complex composed of PxpA, PxpB and PxpC.

The catalysed reaction is 5-oxo-L-proline + ATP + 2 H2O = L-glutamate + ADP + phosphate + H(+). Its function is as follows. Catalyzes the cleavage of 5-oxoproline to form L-glutamate coupled to the hydrolysis of ATP to ADP and inorganic phosphate. In Geobacillus thermodenitrificans (strain NG80-2), this protein is 5-oxoprolinase subunit A.